Here is a 241-residue protein sequence, read N- to C-terminus: Biosynthetic peptidoglycan transglycosylase (241 aa).

A helical membrane pass occupies residues Gly18 to Val38.

It belongs to the glycosyltransferase 51 family.

It localises to the cell inner membrane. It catalyses the reaction [GlcNAc-(1-&gt;4)-Mur2Ac(oyl-L-Ala-gamma-D-Glu-L-Lys-D-Ala-D-Ala)](n)-di-trans,octa-cis-undecaprenyl diphosphate + beta-D-GlcNAc-(1-&gt;4)-Mur2Ac(oyl-L-Ala-gamma-D-Glu-L-Lys-D-Ala-D-Ala)-di-trans,octa-cis-undecaprenyl diphosphate = [GlcNAc-(1-&gt;4)-Mur2Ac(oyl-L-Ala-gamma-D-Glu-L-Lys-D-Ala-D-Ala)](n+1)-di-trans,octa-cis-undecaprenyl diphosphate + di-trans,octa-cis-undecaprenyl diphosphate + H(+). It functions in the pathway cell wall biogenesis; peptidoglycan biosynthesis. In terms of biological role, peptidoglycan polymerase that catalyzes glycan chain elongation from lipid-linked precursors. In Yersinia pseudotuberculosis serotype IB (strain PB1/+), this protein is Biosynthetic peptidoglycan transglycosylase.